A 204-amino-acid polypeptide reads, in one-letter code: CASP-like protein 4B4 (204 aa).

Residues 1–60 (MSAAVAASSGAPAADVEKGAAAADANVDGGGAPAAAAASGEGVVSAVVRRWRRQDLLEKS) lie on the Cytoplasmic side of the membrane. A helical transmembrane segment spans residues 61 to 81 (GSALRVAAWAFSLLAFVVMGA). Residues 82–98 (NDHGDWRQFEHYEEYRY) lie on the Extracellular side of the membrane. Residues 99 to 119 (VVAIGVLAFIYTTLQLVRHGV) traverse the membrane as a helical segment. Residues 120 to 130 (RLTGGQDLQGK) lie on the Cytoplasmic side of the membrane. Residues 131 to 151 (VAVLVDFAGDQVTAYLLMSAV) traverse the membrane as a helical segment. Residues 152–175 (SAAIPITNRMREGADNVFTDSSAA) are Extracellular-facing. The helical transmembrane segment at 176 to 196 (SISMAFFAFLCLALSALVSGF) threads the bilayer. The Cytoplasmic segment spans residues 197-204 (KLAKQTYI).

The protein belongs to the Casparian strip membrane proteins (CASP) family. In terms of assembly, homodimer and heterodimers.

It localises to the cell membrane. This Oryza sativa subsp. japonica (Rice) protein is CASP-like protein 4B4.